The following is a 492-amino-acid chain: MDPYKHRPTSGANSAYWTTNSGAPVWNNNNALTVGHRGPILLEDYHLIEKLAQFDRERIPERVVHARGASAKGFFEVTHDVSQLTCADFLRAPGVQTPVIVRFSTVVHERGSPETLRDPRGFAVKFYTREGNFDLVGNNMPVFFIRDGMKFPDMVHAFKPSPKTNMQENWRVVDFFSHHPESLHMFTFLFDDVGIPLNYRHMDGFGVNTYTLISRDGKAHLVKFHWKPTCGVKCLLDDEAVTVGGTCHTHATKDLTDSIAAGNYPEWKLFIQTIDADHEDRFDFDPLDVTKTWPEDIIPLQPVGRMVLNKNIDNFFAENEQLAFCPAVTVPGIHYSDDKLLQTRIFSYADTQRHRLGPNYLMLPVNAPKCAHHNNHHDGLMNFIHRDEEVNYFPSRFDPTRHAEKYPMPPRVLSGCREKCIIDKENNFKQAGERYRSFDPARQDRFLQRWVDALTDARVTHEIQSIWVSYWSQCDASLGQKLASRLKIKPNM.

Catalysis depends on residues His65 and Asn138. Position 348 (Tyr348) interacts with heme.

It belongs to the catalase family. As to quaternary structure, homotetramer. Requires heme as cofactor. In terms of tissue distribution, in whole endosperms (aleurones plus starchy endosperm), in isolated aleurones and in developing seeds.

The protein resides in the peroxisome. It is found in the glyoxysome. The catalysed reaction is 2 H2O2 = O2 + 2 H2O. Occurs in almost all aerobically respiring organisms and serves to protect cells from the toxic effects of hydrogen peroxide. This Hordeum vulgare (Barley) protein is Catalase isozyme 1 (CAT1).